Reading from the N-terminus, the 237-residue chain is DNA repair protein RecO (237 aa).

This sequence belongs to the RecO family.

In terms of biological role, involved in DNA repair and RecF pathway recombination. This is DNA repair protein RecO from Rickettsia conorii (strain ATCC VR-613 / Malish 7).